Reading from the N-terminus, the 370-residue chain is Putative agmatine deiminase (370 aa).

The active-site Amidino-cysteine intermediate is the cysteine 361.

It belongs to the agmatine deiminase family.

The enzyme catalyses agmatine + H2O = N-carbamoylputrescine + NH4(+). The chain is Putative agmatine deiminase from Shewanella sp. (strain MR-4).